Consider the following 310-residue polypeptide: ADP-L-glycero-D-manno-heptose-6-epimerase (310 aa).

NADP(+)-binding positions include 10–11 (FI), 31–32 (DN), Lys-38, Lys-53, 75–79 (EGACS), and Asn-92. Catalysis depends on Tyr-140, which acts as the Proton acceptor. Residue Lys-144 participates in NADP(+) binding. Asn-169 contacts substrate. 2 residues coordinate NADP(+): Val-170 and Lys-178. The active-site Proton acceptor is Lys-178. Substrate is bound by residues Ser-180, His-187, 201–204 (FEGS), and Arg-209. N6-acetyllysine is present on Lys-267. Position 272 (Tyr-272) interacts with substrate.

This sequence belongs to the NAD(P)-dependent epimerase/dehydratase family. HldD subfamily. Homopentamer. The cofactor is NADP(+). NAD(+) serves as cofactor.

It catalyses the reaction ADP-D-glycero-beta-D-manno-heptose = ADP-L-glycero-beta-D-manno-heptose. It participates in nucleotide-sugar biosynthesis; ADP-L-glycero-beta-D-manno-heptose biosynthesis; ADP-L-glycero-beta-D-manno-heptose from D-glycero-beta-D-manno-heptose 7-phosphate: step 4/4. It functions in the pathway bacterial outer membrane biogenesis; LPS core biosynthesis. Its activity is regulated as follows. Completely inhibited by ADP and ADP-glucose, and partially inhibited by ATP and NADH. In terms of biological role, catalyzes the interconversion between ADP-D-glycero-beta-D-manno-heptose and ADP-L-glycero-beta-D-manno-heptose via an epimerization at carbon 6 of the heptose. The chain is ADP-L-glycero-D-manno-heptose-6-epimerase (hldD) from Escherichia coli (strain K12).